The primary structure comprises 61 residues: Large ribosomal subunit protein eL37 (61 aa).

Positions 19, 22, 34, and 37 each coordinate Zn(2+). Residues 19-37 form a C4-type zinc finger; that stretch reads CRRCGRNAYNVSKHYCAAC.

The protein belongs to the eukaryotic ribosomal protein eL37 family. Zn(2+) is required as a cofactor.

Binds to the 23S rRNA. The polypeptide is Large ribosomal subunit protein eL37 (Saccharolobus islandicus (strain L.S.2.15 / Lassen #1) (Sulfolobus islandicus)).